A 187-amino-acid polypeptide reads, in one-letter code: Large ribosomal subunit protein bL9 (187 aa).

The disordered stretch occupies residues 155–187 (AQRGGMVTGLREEDEEEEVEETATEEGGEETAA). Residues 166–187 (EEDEEEEVEETATEEGGEETAA) are compositionally biased toward acidic residues.

This sequence belongs to the bacterial ribosomal protein bL9 family.

Binds to the 23S rRNA. This chain is Large ribosomal subunit protein bL9, found in Rhodospirillum centenum (strain ATCC 51521 / SW).